The following is a 472-amino-acid chain: Lycopene beta cyclase, chloroplastic (472 aa).

A chloroplast-targeting transit peptide spans 1–25; sequence MDALLTSPFIPLKKPSHNRKSNTTT. The interval 1 to 27 is disordered; sequence MDALLTSPFIPLKKPSHNRKSNTTTAS. 62–90 is an NAD(+) binding site; the sequence is LAVVGGGPAGLAVAKRVSDAGLSVCSIDP.

The protein belongs to the lycopene cyclase family. As to expression, expressed in flower buds and lips. Detected in roots and leaves.

The protein localises to the plastid. Its subcellular location is the chloroplast. It carries out the reaction a carotenoid psi-end group = a carotenoid beta-end derivative. It functions in the pathway carotenoid biosynthesis; beta-carotene biosynthesis. It participates in carotenoid biosynthesis; beta-zeacarotene biosynthesis. Functionally, catalyzes the double cyclization reaction which converts lycopene to beta-carotene and neurosporene to beta-zeacarotene. The sequence is that of Lycopene beta cyclase, chloroplastic (LCY-B) from Oncidium hybrid cultivar (Orchid).